A 476-amino-acid polypeptide reads, in one-letter code: UDP-N-acetylmuramate--L-alanine ligase (476 aa).

Position 123 to 129 (123 to 129 (GTHGKTT)) interacts with ATP.

Belongs to the MurCDEF family.

The protein resides in the cytoplasm. It catalyses the reaction UDP-N-acetyl-alpha-D-muramate + L-alanine + ATP = UDP-N-acetyl-alpha-D-muramoyl-L-alanine + ADP + phosphate + H(+). The protein operates within cell wall biogenesis; peptidoglycan biosynthesis. Cell wall formation. The sequence is that of UDP-N-acetylmuramate--L-alanine ligase from Nitrosococcus oceani (strain ATCC 19707 / BCRC 17464 / JCM 30415 / NCIMB 11848 / C-107).